A 101-amino-acid polypeptide reads, in one-letter code: Small ribosomal subunit protein uS14 (101 aa).

It belongs to the universal ribosomal protein uS14 family. As to quaternary structure, part of the 30S ribosomal subunit. Contacts proteins S3 and S10.

Functionally, binds 16S rRNA, required for the assembly of 30S particles and may also be responsible for determining the conformation of the 16S rRNA at the A site. This is Small ribosomal subunit protein uS14 from Dechloromonas aromatica (strain RCB).